Here is a 94-residue protein sequence, read N- to C-terminus: Pyrimidine/purine nucleoside phosphorylase 2 (94 aa).

The protein belongs to the nucleoside phosphorylase PpnP family.

The catalysed reaction is a purine D-ribonucleoside + phosphate = a purine nucleobase + alpha-D-ribose 1-phosphate. It carries out the reaction adenosine + phosphate = alpha-D-ribose 1-phosphate + adenine. The enzyme catalyses cytidine + phosphate = cytosine + alpha-D-ribose 1-phosphate. It catalyses the reaction guanosine + phosphate = alpha-D-ribose 1-phosphate + guanine. The catalysed reaction is inosine + phosphate = alpha-D-ribose 1-phosphate + hypoxanthine. It carries out the reaction thymidine + phosphate = 2-deoxy-alpha-D-ribose 1-phosphate + thymine. The enzyme catalyses uridine + phosphate = alpha-D-ribose 1-phosphate + uracil. It catalyses the reaction xanthosine + phosphate = alpha-D-ribose 1-phosphate + xanthine. In terms of biological role, catalyzes the phosphorolysis of diverse nucleosides, yielding D-ribose 1-phosphate and the respective free bases. Can use uridine, adenosine, guanosine, cytidine, thymidine, inosine and xanthosine as substrates. Also catalyzes the reverse reactions. This is Pyrimidine/purine nucleoside phosphorylase 2 from Psychrobacter cryohalolentis (strain ATCC BAA-1226 / DSM 17306 / VKM B-2378 / K5).